A 55-amino-acid polypeptide reads, in one-letter code: ATP synthase protein 8 (55 aa).

A helical transmembrane segment spans residues 7-24; the sequence is NPWLFIMLMSWLTFSLII. Residues 35–55 are disordered; it reads NPPSNKTPTTTKTSPWTWPWT. A compositionally biased stretch (low complexity) spans 37–55; that stretch reads PSNKTPTTTKTSPWTWPWT.

Belongs to the ATPase protein 8 family. As to quaternary structure, F-type ATPases have 2 components, CF(1) - the catalytic core - and CF(0) - the membrane proton channel.

Its subcellular location is the mitochondrion membrane. In terms of biological role, mitochondrial membrane ATP synthase (F(1)F(0) ATP synthase or Complex V) produces ATP from ADP in the presence of a proton gradient across the membrane which is generated by electron transport complexes of the respiratory chain. F-type ATPases consist of two structural domains, F(1) - containing the extramembraneous catalytic core and F(0) - containing the membrane proton channel, linked together by a central stalk and a peripheral stalk. During catalysis, ATP synthesis in the catalytic domain of F(1) is coupled via a rotary mechanism of the central stalk subunits to proton translocation. Part of the complex F(0) domain. Minor subunit located with subunit a in the membrane. This chain is ATP synthase protein 8 (MT-ATP8), found in Corythaeola cristata (Great blue turaco).